A 64-amino-acid chain; its full sequence is Large ribosomal subunit protein bL35 (64 aa).

It belongs to the bacterial ribosomal protein bL35 family.

This Chloroherpeton thalassium (strain ATCC 35110 / GB-78) protein is Large ribosomal subunit protein bL35.